The primary structure comprises 534 residues: NEDD8-activating enzyme E1 regulatory subunit (534 aa).

N-acetylalanine is present on Ala2. 2 positions are modified to N6-acetyllysine: Lys6 and Lys341. The tract at residues 331–344 (DMIADSGKYIKLQN) is interaction with UBA3.

It belongs to the ubiquitin-activating E1 family. ULA1 subfamily. In terms of assembly, heterodimer of UBA3 and NAE1. The complex binds NEDD8 and UBE2M. Binds APP and TP53BP2. Post-translationally, ubiquitinated by TRIP12, leading to its degradation by the proteasome. As to expression, ubiquitous in fetal tissues. Expressed throughout the adult brain.

The protein localises to the cell membrane. It participates in protein modification; protein neddylation. Its activity is regulated as follows. Binding of TP53BP2 to the regulatory subunit NAE1 decreases neddylation activity. Functionally, regulatory subunit of the dimeric UBA3-NAE1 E1 enzyme. E1 activates NEDD8 by first adenylating its C-terminal glycine residue with ATP, thereafter linking this residue to the side chain of the catalytic cysteine, yielding a NEDD8-UBA3 thioester and free AMP. E1 finally transfers NEDD8 to the catalytic cysteine of UBE2M. Necessary for cell cycle progression through the S-M checkpoint. Overexpression of NAE1 causes apoptosis through deregulation of NEDD8 conjugation. The covalent attachment of NEDD8 to target proteins is known as 'neddylation' and the process is involved in the regulation of cell growth, viability and development. The polypeptide is NEDD8-activating enzyme E1 regulatory subunit (NAE1) (Homo sapiens (Human)).